Here is a 154-residue protein sequence, read N- to C-terminus: Myoglobin (154 aa).

In terms of domain architecture, Globin spans G2–K148. Position 4 is a phosphoserine (S4). H65 lines the nitrite pocket. H65 provides a ligand contact to O2. T68 is modified (phosphothreonine). A heme b-binding site is contributed by H94.

It belongs to the globin family. As to quaternary structure, monomeric.

It localises to the cytoplasm. It is found in the sarcoplasm. The catalysed reaction is Fe(III)-heme b-[protein] + nitric oxide + H2O = Fe(II)-heme b-[protein] + nitrite + 2 H(+). The enzyme catalyses H2O2 + AH2 = A + 2 H2O. Monomeric heme protein which primary function is to store oxygen and facilitate its diffusion within muscle tissues. Reversibly binds oxygen through a pentacoordinated heme iron and enables its timely and efficient release as needed during periods of heightened demand. Depending on the oxidative conditions of tissues and cells, and in addition to its ability to bind oxygen, it also has a nitrite reductase activity whereby it regulates the production of bioactive nitric oxide. Under stress conditions, like hypoxia and anoxia, it also protects cells against reactive oxygen species thanks to its pseudoperoxidase activity. This is Myoglobin (MB) from Castor fiber (Eurasian beaver).